A 297-amino-acid polypeptide reads, in one-letter code: Urease accessory protein UreD (297 aa).

Low complexity predominate over residues 1 to 18 (MNSSAASPPAVSPHAAPS). Disordered regions lie at residues 1–20 (MNSS…PSRT) and 178–201 (VDQA…PRRR).

Belongs to the UreD family. UreD, UreF and UreG form a complex that acts as a GTP-hydrolysis-dependent molecular chaperone, activating the urease apoprotein by helping to assemble the nickel containing metallocenter of UreC. The UreE protein probably delivers the nickel.

It is found in the cytoplasm. In terms of biological role, required for maturation of urease via the functional incorporation of the urease nickel metallocenter. This Parafrankia sp. (strain EAN1pec) protein is Urease accessory protein UreD.